Reading from the N-terminus, the 249-residue chain is ATP synthase subunit a, chloroplastic (249 aa).

The next 5 helical transmembrane spans lie at 40–60, 97–117, 136–156, 201–221, and 222–242; these read QVLI…VLAV, VPFI…GALL, INTT…AGLS, LVVV…VMFL, and GLFT…AYIG.

Belongs to the ATPase A chain family. In terms of assembly, F-type ATPases have 2 components, CF(1) - the catalytic core - and CF(0) - the membrane proton channel. CF(1) has five subunits: alpha(3), beta(3), gamma(1), delta(1), epsilon(1). CF(0) has four main subunits: a, b, b' and c.

It is found in the plastid. The protein localises to the chloroplast thylakoid membrane. In terms of biological role, key component of the proton channel; it plays a direct role in the translocation of protons across the membrane. This chain is ATP synthase subunit a, chloroplastic, found in Draba nemorosa (Woodland whitlowgrass).